Reading from the N-terminus, the 465-residue chain is MKHIVKHIHFVGIGGAGMSGIAEVLVNLGYQVSGSDLARNAVTERLEALGARVSIGHDAANIEGANAVVVSTAVRSDNPEVLAARRLRVPIVPRAVMLAELMRLKQGIAIAGTHGKTTTTSLVASVLAAGGLDPTFVIGGRLTSAGANARLGTGDFIVAEADESDASFLNLYPVIEVITNIDADHMDTYGHDFARLKQAFIEFTQRLPFYGSAVVCIDDPNVRQIVPLISKPVVRYGFAADAQVRAENVEARDGRMHFTVLREGREPLPVVLNLPGLHNVQNALAAIAIATDLDVADTAIQQALAEFNGVGRRFQRYGEMPAAGGGAYTLIDDYGHHPVEMAATIAAARGAFPGRRLVLAFQPHRYTRTRDCFDDFVNVLSTVDALVLTEVYAAGEAPISTANGDALSRALRAAGKVEPVFVATVDEVPDALAKLARAGDVVITMGAGSIGGVPGKLAQDTQQKG.

112 to 118 serves as a coordination point for ATP; that stretch reads GTHGKTT.

Belongs to the MurCDEF family.

Its subcellular location is the cytoplasm. It catalyses the reaction UDP-N-acetyl-alpha-D-muramate + L-alanine + ATP = UDP-N-acetyl-alpha-D-muramoyl-L-alanine + ADP + phosphate + H(+). It functions in the pathway cell wall biogenesis; peptidoglycan biosynthesis. Functionally, cell wall formation. This chain is UDP-N-acetylmuramate--L-alanine ligase, found in Burkholderia thailandensis (strain ATCC 700388 / DSM 13276 / CCUG 48851 / CIP 106301 / E264).